A 129-amino-acid chain; its full sequence is uncharacterized protein (129 aa).

Over residues 1 to 13 the composition is skewed to low complexity; the sequence is MSDVAETVVAQEP. Positions 1-129 are disordered; sequence MSDVAETVVA…SGDAPAVAAE (129 aa). The segment covering 34–94 has biased composition (basic and acidic residues); it reads IDEKTSEQNG…KRVSSAHEEA (61 aa). Residues 117–129 are compositionally biased toward low complexity; sequence VAASGDAPAVAAE.

This is an uncharacterized protein from Caenorhabditis elegans.